A 438-amino-acid polypeptide reads, in one-letter code: GTPase Der (438 aa).

2 EngA-type G domains span residues 4 to 168 and 177 to 352; these read PIVA…KNEG and IKIA…DNYC. Residues 10–17, 57–61, 120–123, 183–190, 230–234, and 295–298 each bind GTP; these read GRPNVGKS, DTGGI, NKID, GKPNVGKS, DTAGV, and NKWD. The KH-like domain maps to 353 to 437; it reads KQIKTGILND…GIKLEFRERK (85 aa).

Belongs to the TRAFAC class TrmE-Era-EngA-EngB-Septin-like GTPase superfamily. EngA (Der) GTPase family. As to quaternary structure, associates with the 50S ribosomal subunit.

GTPase that plays an essential role in the late steps of ribosome biogenesis. In Clostridium kluyveri (strain NBRC 12016), this protein is GTPase Der.